We begin with the raw amino-acid sequence, 545 residues long: Probable bifunctional tRNA threonylcarbamoyladenosine biosynthesis protein (545 aa).

The tract at residues Met1–Trp329 is kae1. His112, His116, and Tyr133 together coordinate Fe cation. L-threonylcarbamoyladenylate is bound by residues Tyr133–Gly137, Asp165, Gly178, Glu182, and Asn262. Residue Asp290 participates in Fe cation binding. The Protein kinase domain occupies Ile344–Leu545. ATP-binding positions include Ile350–Ile358 and Lys371. Asp463 serves as the catalytic Proton acceptor; for kinase activity.

In the N-terminal section; belongs to the KAE1 / TsaD family. The protein in the C-terminal section; belongs to the protein kinase superfamily. Tyr protein kinase family. BUD32 subfamily. As to quaternary structure, component of the KEOPS complex that consists of Kae1, Bud32, Cgi121 and Pcc1; the whole complex dimerizes. Fe(2+) serves as cofactor.

It localises to the cytoplasm. It catalyses the reaction L-seryl-[protein] + ATP = O-phospho-L-seryl-[protein] + ADP + H(+). The enzyme catalyses L-threonyl-[protein] + ATP = O-phospho-L-threonyl-[protein] + ADP + H(+). It carries out the reaction L-threonylcarbamoyladenylate + adenosine(37) in tRNA = N(6)-L-threonylcarbamoyladenosine(37) in tRNA + AMP + H(+). Required for the formation of a threonylcarbamoyl group on adenosine at position 37 (t(6)A37) in tRNAs that read codons beginning with adenine. Is a component of the KEOPS complex that is probably involved in the transfer of the threonylcarbamoyl moiety of threonylcarbamoyl-AMP (TC-AMP) to the N6 group of A37. The Kae1 domain likely plays a direct catalytic role in this reaction. The Bud32 domain probably displays kinase activity that regulates Kae1 function. This Methanococcus maripaludis (strain C5 / ATCC BAA-1333) protein is Probable bifunctional tRNA threonylcarbamoyladenosine biosynthesis protein.